A 473-amino-acid polypeptide reads, in one-letter code: Aspartyl/glutamyl-tRNA(Asn/Gln) amidotransferase subunit B (473 aa).

This sequence belongs to the GatB/GatE family. GatB subfamily. Heterotrimer of A, B and C subunits.

The catalysed reaction is L-glutamyl-tRNA(Gln) + L-glutamine + ATP + H2O = L-glutaminyl-tRNA(Gln) + L-glutamate + ADP + phosphate + H(+). It catalyses the reaction L-aspartyl-tRNA(Asn) + L-glutamine + ATP + H2O = L-asparaginyl-tRNA(Asn) + L-glutamate + ADP + phosphate + 2 H(+). Its function is as follows. Allows the formation of correctly charged Asn-tRNA(Asn) or Gln-tRNA(Gln) through the transamidation of misacylated Asp-tRNA(Asn) or Glu-tRNA(Gln) in organisms which lack either or both of asparaginyl-tRNA or glutaminyl-tRNA synthetases. The reaction takes place in the presence of glutamine and ATP through an activated phospho-Asp-tRNA(Asn) or phospho-Glu-tRNA(Gln). The protein is Aspartyl/glutamyl-tRNA(Asn/Gln) amidotransferase subunit B of Francisella tularensis subsp. tularensis (strain FSC 198).